Here is a 554-residue protein sequence, read N- to C-terminus: DM7 family protein GG17593 (554 aa).

This sequence belongs to the DM7 family.

The sequence is that of DM7 family protein GG17593 from Drosophila erecta (Fruit fly).